A 92-amino-acid polypeptide reads, in one-letter code: Small ribosomal subunit protein uS19c (92 aa).

This sequence belongs to the universal ribosomal protein uS19 family.

It is found in the plastid. It localises to the chloroplast. Functionally, protein S19 forms a complex with S13 that binds strongly to the 16S ribosomal RNA. The polypeptide is Small ribosomal subunit protein uS19c (Angiopteris evecta (Mule's foot fern)).